Consider the following 466-residue polypeptide: Delta-1 crystallin (466 aa).

Belongs to the lyase 1 family. Argininosuccinate lyase subfamily. In terms of assembly, homotetramer. In terms of tissue distribution, eye lens.

Its function is as follows. Delta crystallin, the principal crystallin in embryonic lens, is found only in birds and reptiles. Despite possessing the necessary catalytic residues, this protein does not function as an enzymatically active argininosuccinate lyase. This is Delta-1 crystallin (ASL1) from Anas platyrhynchos (Mallard).